The following is a 266-amino-acid chain: MKEIKVIIAGPRGRMGYEAVLLMERTAHFNLVAAIDYKHGGEKISDLPGMPALDAPIYADLHTCLDEVEADVLLDLTTPEIGKKHVTLAVERGLRSVIGTTGFTEEELKQLTENAKEKEVGTIIAPNFAIGAVLMMKFSQMAAKYFQDVEVIELHHDQKLDAPSGTAVKTVELIRQNRVPKEQGHPNETEQLEGARGANVDGIHIHSVRLPGLIAHQEVMFGGDGQMLTVRHDSFNRASFMSGVKLSIETVMNLDHLVYGLENIID.

10–15 (GPRGRM) contributes to the NAD(+) binding site. K38 is a binding site for NADP(+). NAD(+)-binding positions include 99–101 (GTT) and 125–128 (APNF). Catalysis depends on H155, which acts as the Proton donor/acceptor. A (S)-2,3,4,5-tetrahydrodipicolinate-binding site is contributed by H156. K159 serves as the catalytic Proton donor. 165–166 (GT) contributes to the (S)-2,3,4,5-tetrahydrodipicolinate binding site.

It belongs to the DapB family.

The protein resides in the cytoplasm. The catalysed reaction is (S)-2,3,4,5-tetrahydrodipicolinate + NAD(+) + H2O = (2S,4S)-4-hydroxy-2,3,4,5-tetrahydrodipicolinate + NADH + H(+). The enzyme catalyses (S)-2,3,4,5-tetrahydrodipicolinate + NADP(+) + H2O = (2S,4S)-4-hydroxy-2,3,4,5-tetrahydrodipicolinate + NADPH + H(+). It functions in the pathway amino-acid biosynthesis; L-lysine biosynthesis via DAP pathway; (S)-tetrahydrodipicolinate from L-aspartate: step 4/4. Catalyzes the conversion of 4-hydroxy-tetrahydrodipicolinate (HTPA) to tetrahydrodipicolinate. The sequence is that of 4-hydroxy-tetrahydrodipicolinate reductase from Bacillus mycoides (strain KBAB4) (Bacillus weihenstephanensis).